Consider the following 158-residue polypeptide: Snaclec mucetin subunit alpha (158 aa).

The signal sequence occupies residues 1–23 (MGRFTFVSFGLLVVFLSLSGTGA). Intrachain disulfides connect C27–C38, C55–C152, and C127–C144. The region spanning 34–153 (YDRYCYQAFS…CGRENPFVCK (120 aa)) is the C-type lectin domain.

Belongs to the snaclec family. Dimer and tetramer of heterodimers of alpha and beta subunits ((alphabeta)(2) and (alphabeta)(4)); disulfide-linked. These two multimeric forms are found. Post-translationally, the complex is glycosylated. As to expression, expressed by the venom gland.

The protein resides in the secreted. Potent platelet activator that acts via GPIb (GP1BA/GP1BB). After activation by the toxin, the receptor is redistributed on platelet surface thanks to cytoskeletal translocation. The indirect activation of integrin alpha-IIb/beta-3 (ITGA2B/ITGB3) also induced by the toxin is downstream the cytoskeletal translocation of GPIb. In Protobothrops mucrosquamatus (Taiwan habu), this protein is Snaclec mucetin subunit alpha.